We begin with the raw amino-acid sequence, 757 residues long: Polyribonucleotide nucleotidyltransferase (757 aa).

The Mg(2+) site is built by Asp531 and Asp537. The KH domain maps to 597-656 (PRVTTIRVPVDKIGEVIGPKGKIINAITEETGAQISIEDDGTVFVGATDGPSAQAAIDRI). The region spanning 668–737 (GERFLGTVVK…KRGKISLVLV (70 aa)) is the S1 motif domain.

Belongs to the polyribonucleotide nucleotidyltransferase family. Mg(2+) serves as cofactor.

It localises to the cytoplasm. It catalyses the reaction RNA(n+1) + phosphate = RNA(n) + a ribonucleoside 5'-diphosphate. Its function is as follows. Involved in mRNA degradation. Catalyzes the phosphorolysis of single-stranded polyribonucleotides processively in the 3'- to 5'-direction. This is Polyribonucleotide nucleotidyltransferase from Mycolicibacterium paratuberculosis (strain ATCC BAA-968 / K-10) (Mycobacterium paratuberculosis).